The primary structure comprises 311 residues: N-acetylmuramic acid 6-phosphate etherase (311 aa).

Residues 66-229 (VADRMARGGR…STITMIRLGK (164 aa)) form the SIS domain. The active-site Proton donor is the E94. E125 is a catalytic residue.

It belongs to the GCKR-like family. MurNAc-6-P etherase subfamily. As to quaternary structure, homodimer.

The enzyme catalyses N-acetyl-D-muramate 6-phosphate + H2O = N-acetyl-D-glucosamine 6-phosphate + (R)-lactate. It functions in the pathway amino-sugar metabolism; N-acetylmuramate degradation. Functionally, specifically catalyzes the cleavage of the D-lactyl ether substituent of MurNAc 6-phosphate, producing GlcNAc 6-phosphate and D-lactate. The sequence is that of N-acetylmuramic acid 6-phosphate etherase from Streptomyces avermitilis (strain ATCC 31267 / DSM 46492 / JCM 5070 / NBRC 14893 / NCIMB 12804 / NRRL 8165 / MA-4680).